The chain runs to 332 residues: Anthranilate phosphoribosyltransferase (332 aa).

5-phospho-alpha-D-ribose 1-diphosphate is bound by residues G79, 82–83 (GD), S87, 89–92 (NIST), 107–115 (KHGNRSVSS), and S119. Residue G79 participates in anthranilate binding. S91 lines the Mg(2+) pocket. An anthranilate-binding site is contributed by N110. R165 contributes to the anthranilate binding site. The Mg(2+) site is built by D223 and E224.

Belongs to the anthranilate phosphoribosyltransferase family. In terms of assembly, homodimer. The cofactor is Mg(2+).

It carries out the reaction N-(5-phospho-beta-D-ribosyl)anthranilate + diphosphate = 5-phospho-alpha-D-ribose 1-diphosphate + anthranilate. Its pathway is amino-acid biosynthesis; L-tryptophan biosynthesis; L-tryptophan from chorismate: step 2/5. Catalyzes the transfer of the phosphoribosyl group of 5-phosphorylribose-1-pyrophosphate (PRPP) to anthranilate to yield N-(5'-phosphoribosyl)-anthranilate (PRA). In Yersinia pestis bv. Antiqua (strain Antiqua), this protein is Anthranilate phosphoribosyltransferase.